Consider the following 230-residue polypeptide: uncharacterized protein (230 aa).

3 residues coordinate a divalent metal cation: Glu74, Glu76, and Asp105.

This sequence belongs to the FAH family.

This is an uncharacterized protein from Pyrococcus horikoshii (strain ATCC 700860 / DSM 12428 / JCM 9974 / NBRC 100139 / OT-3).